We begin with the raw amino-acid sequence, 237 residues long: 1-(5-phosphoribosyl)-5-[(5-phosphoribosylamino)methylideneamino] imidazole-4-carboxamide isomerase (237 aa).

The active-site Proton acceptor is Asp8. Residue Asp129 is the Proton donor of the active site.

Belongs to the HisA/HisF family.

It localises to the cytoplasm. The catalysed reaction is 1-(5-phospho-beta-D-ribosyl)-5-[(5-phospho-beta-D-ribosylamino)methylideneamino]imidazole-4-carboxamide = 5-[(5-phospho-1-deoxy-D-ribulos-1-ylimino)methylamino]-1-(5-phospho-beta-D-ribosyl)imidazole-4-carboxamide. It functions in the pathway amino-acid biosynthesis; L-histidine biosynthesis; L-histidine from 5-phospho-alpha-D-ribose 1-diphosphate: step 4/9. The chain is 1-(5-phosphoribosyl)-5-[(5-phosphoribosylamino)methylideneamino] imidazole-4-carboxamide isomerase from Roseiflexus sp. (strain RS-1).